Reading from the N-terminus, the 981-residue chain is Ubiquitin carboxyl-terminal hydrolase 37 (981 aa).

The KEN box 1 motif lies at lysine 32–asparagine 34. 2 short sequence motifs (D-box) span residues arginine 71–asparagine 79 and arginine 96–asparagine 105. Positions methionine 111–phenylalanine 306 are disordered. Serine 114 is modified (phosphoserine). The span at arginine 135–arginine 148 shows a compositional bias: polar residues. Over residues glycine 149 to phenylalanine 159 the composition is skewed to basic and acidic residues. A D-box 3 motif is present at residues arginine 160 to arginine 168. Serine 170 is subject to Phosphoserine. Over residues arginine 183 to leucine 200 the composition is skewed to low complexity. At serine 212 the chain carries Phosphoserine. The short motif at lysine 223–asparagine 225 is the KEN box 2 element. Positions serine 245–arginine 259 are enriched in basic and acidic residues. Residues proline 283–alanine 300 show a composition bias toward polar residues. Residues glutamine 343–lysine 953 enclose the USP domain. Cysteine 352 serves as the catalytic Nucleophile. Serine 630 is modified (phosphoserine; by CDK2). Serine 652 and serine 654 each carry phosphoserine. Disordered stretches follow at residues glutamate 670–methionine 705 and glutamate 721–aspartate 797. Basic and acidic residues-rich tracts occupy residues lysine 683–leucine 697 and glutamate 721–proline 734. A UIM 1 domain is found at serine 706–serine 725. Serine 772 is modified (phosphoserine). Residues isoleucine 776 to threonine 788 are compositionally biased toward basic and acidic residues. The KEN box 3 motif lies at lysine 784–asparagine 786. 2 consecutive UIM domains span residues arginine 808 to tryptophan 827 and lysine 830 to serine 849. Histidine 908 functions as the Proton acceptor in the catalytic mechanism.

It belongs to the peptidase C19 family. In terms of assembly, interacts with FZR1/CDH1. Interacts with CDT1. In terms of processing, polyubiquitinated via 'Lys-11'-linked ubiquitin by the APC(CDH1) complex during late mitosis, leading to its degradation. Able to mediate auto-deubiquitination. Phosphorylated at Ser-630 by CDK2 during G1/S phase but not during mitosis; phosphorylation at Ser-630 is required for deubiquitinase activity. Also polyubiquitinated during early G1 phase, without leading to degradation. Phosphorylated at Ser-114 by ATM following DNA damage, which in turn increases its deubiquitination activity towards BLM.

Its subcellular location is the nucleus. It is found in the chromosome. It carries out the reaction Thiol-dependent hydrolysis of ester, thioester, amide, peptide and isopeptide bonds formed by the C-terminal Gly of ubiquitin (a 76-residue protein attached to proteins as an intracellular targeting signal).. In terms of biological role, deubiquitinase that plays a role in different processes including cell cycle regulation, DNA replication or DNA damage response. Antagonizes the anaphase-promoting complex (APC/C) during G1/S transition by mediating deubiquitination of cyclin-A (CCNA1 and CCNA2), thereby promoting S phase entry. Specifically mediates deubiquitination of 'Lys-11'-linked polyubiquitin chains, a specific ubiquitin-linkage type mediated by the APC/C complex. Phosphorylation at Ser-628 during G1/S phase maximizes the deubiquitinase activity, leading to prevent degradation of cyclin-A (CCNA1 and CCNA2). Plays an important role in the regulation of DNA replication by stabilizing the licensing factor CDT1. Also plays an essential role beyond S-phase entry to promote the efficiency and fidelity of replication by deubiquitinating checkpoint kinase 1/CHK1, promoting its stability. Sustains the DNA damage response (DDR) by deubiquitinating and stabilizing the ATP-dependent DNA helicase BLM. Mechanistically, DNA double-strand breaks (DSB) promotes ATM-mediated phosphorylation of USP37 and enhances the binding between USP37 and BLM. Promotes cell migration by deubiquitinating and stabilizing the epithelial-mesenchymal transition (EMT)-inducing transcription factor SNAI. Plays a role in the regulation of mitotic spindle assembly and mitotic progression by associating with chromatin-associated WAPL and stabilizing it through deubiquitination. The sequence is that of Ubiquitin carboxyl-terminal hydrolase 37 (USP37) from Bos taurus (Bovine).